A 44-amino-acid chain; its full sequence is Conotoxin Cl9a (44 aa).

4-carboxyglutamate is present on residues glutamate 7, glutamate 8, and glutamate 24. Intrachain disulfides connect cysteine 9-cysteine 33, cysteine 15-cysteine 40, and cysteine 23-cysteine 42.

Expressed by the venom duct.

It localises to the secreted. The protein is Conotoxin Cl9a of Californiconus californicus (California cone).